The primary structure comprises 908 residues: Alanine--tRNA ligase (908 aa).

Zn(2+)-binding residues include H588, H592, C691, and H695.

The protein belongs to the class-II aminoacyl-tRNA synthetase family. Requires Zn(2+) as cofactor.

The protein resides in the cytoplasm. The catalysed reaction is tRNA(Ala) + L-alanine + ATP = L-alanyl-tRNA(Ala) + AMP + diphosphate. Its function is as follows. Catalyzes the attachment of alanine to tRNA(Ala) in a two-step reaction: alanine is first activated by ATP to form Ala-AMP and then transferred to the acceptor end of tRNA(Ala). Also edits incorrectly charged Ser-tRNA(Ala) and Gly-tRNA(Ala) via its editing domain. The sequence is that of Alanine--tRNA ligase from Mycobacterium leprae (strain TN).